Reading from the N-terminus, the 123-residue chain is Histone H2B.1, embryonic (123 aa).

The segment at 1-32 (MAPTGQVAKKGSKKAVKPPRASGGKKRHRKRK) is disordered. The span at 10–32 (KGSKKAVKPPRASGGKKRHRKRK) shows a compositional bias: basic residues. O-linked (GlcNAc) serine glycosylation is present at S110. K118 is covalently cross-linked (Glycyl lysine isopeptide (Lys-Gly) (interchain with G-Cter in ubiquitin)).

Belongs to the histone H2B family. As to quaternary structure, the nucleosome is a histone octamer containing two molecules each of H2A, H2B, H3 and H4 assembled in one H3-H4 heterotetramer and two H2A-H2B heterodimers. The octamer wraps approximately 147 bp of DNA. Monoubiquitination of Lys-118 gives a specific tag for epigenetic transcriptional activation and is also prerequisite for histone H3 'Lys-4' and 'Lys-79' methylation. Post-translationally, glcNAcylation at Ser-110 promotes monoubiquitination of Lys-118. It fluctuates in response to extracellular glucose, and associates with transcribed genes.

Its subcellular location is the nucleus. It is found in the chromosome. Functionally, core component of nucleosome. Nucleosomes wrap and compact DNA into chromatin, limiting DNA accessibility to the cellular machineries which require DNA as a template. Histones thereby play a central role in transcription regulation, DNA repair, DNA replication and chromosomal stability. DNA accessibility is regulated via a complex set of post-translational modifications of histones, also called histone code, and nucleosome remodeling. In Psammechinus miliaris (Green sea urchin), this protein is Histone H2B.1, embryonic.